The chain runs to 276 residues: Glutamate racemase (276 aa).

Residues 12-13 (DS) and 44-45 (YG) each bind substrate. The Proton donor/acceptor role is filled by Cys-76. 77–78 (NT) is a substrate binding site. Cys-187 (proton donor/acceptor) is an active-site residue. A substrate-binding site is contributed by 188–189 (TH).

This sequence belongs to the aspartate/glutamate racemases family.

The catalysed reaction is L-glutamate = D-glutamate. Its pathway is cell wall biogenesis; peptidoglycan biosynthesis. Its function is as follows. Provides the (R)-glutamate required for cell wall biosynthesis. In Granulibacter bethesdensis (strain ATCC BAA-1260 / CGDNIH1), this protein is Glutamate racemase.